The following is a 366-amino-acid chain: tRNA(Met) cytidine acetate ligase (366 aa).

Residues 7–20 (IAEF…HQYL), Gly101, Asn145, and Arg170 contribute to the ATP site.

Belongs to the TmcAL family.

It is found in the cytoplasm. It carries out the reaction cytidine(34) in elongator tRNA(Met) + acetate + ATP = N(4)-acetylcytidine(34) in elongator tRNA(Met) + AMP + diphosphate. Functionally, catalyzes the formation of N(4)-acetylcytidine (ac(4)C) at the wobble position of elongator tRNA(Met), using acetate and ATP as substrates. First activates an acetate ion to form acetyladenylate (Ac-AMP) and then transfers the acetyl group to tRNA to form ac(4)C34. This Pediococcus pentosaceus (strain ATCC 25745 / CCUG 21536 / LMG 10740 / 183-1w) protein is tRNA(Met) cytidine acetate ligase.